Here is a 231-residue protein sequence, read N- to C-terminus: 7-cyano-7-deazaguanine synthase (231 aa).

ATP is bound at residue 8-18 (FSGGQDSTTCL). Zn(2+) contacts are provided by C188, C197, C200, and C203.

This sequence belongs to the QueC family. It depends on Zn(2+) as a cofactor.

It catalyses the reaction 7-carboxy-7-deazaguanine + NH4(+) + ATP = 7-cyano-7-deazaguanine + ADP + phosphate + H2O + H(+). It participates in purine metabolism; 7-cyano-7-deazaguanine biosynthesis. Functionally, catalyzes the ATP-dependent conversion of 7-carboxy-7-deazaguanine (CDG) to 7-cyano-7-deazaguanine (preQ(0)). The polypeptide is 7-cyano-7-deazaguanine synthase (Cronobacter sakazakii (strain ATCC BAA-894) (Enterobacter sakazakii)).